Reading from the N-terminus, the 89-residue chain is Small ribosomal subunit protein bS16 (89 aa).

It belongs to the bacterial ribosomal protein bS16 family.

This chain is Small ribosomal subunit protein bS16, found in Gloeobacter violaceus (strain ATCC 29082 / PCC 7421).